Reading from the N-terminus, the 340-residue chain is 4-dimethylallyltryptophan N-methyltransferase easF (340 aa).

The protein belongs to the methyltransferase superfamily. Homodimer.

It catalyses the reaction 4-(3-methylbut-2-enyl)-L-tryptophan + S-adenosyl-L-methionine = 4-(3-methylbut-2-enyl)-L-abrine + S-adenosyl-L-homocysteine + H(+). It functions in the pathway alkaloid biosynthesis; ergot alkaloid biosynthesis. Its function is as follows. 4-dimethylallyltryptophan N-methyltransferase; part of the gene cluster that mediates the biosynthesis of fungal ergot alkaloid. DmaW catalyzes the first step of ergot alkaloid biosynthesis by condensing dimethylallyl diphosphate (DMAP) and tryptophan to form 4-dimethylallyl-L-tryptophan. The second step is catalyzed by the methyltransferase easF that methylates 4-dimethylallyl-L-tryptophan in the presence of S-adenosyl-L-methionine, resulting in the formation of 4-dimethylallyl-L-abrine. The catalase easC and the FAD-dependent oxidoreductase easE then transform 4-dimethylallyl-L-abrine to chanoclavine-I which is further oxidized by easD in the presence of NAD(+), resulting in the formation of chanoclavine-I aldehyde. Chanoclavine-I aldehyde is the precursor of ergoamides and ergopeptines in Clavicipitaceae, and clavine-type alcaloids such as fumiclavine in Trichocomaceae. However, the metabolites downstream of chanoclavine-I aldehyde in Arthrodermataceae have not been identified yet. The protein is 4-dimethylallyltryptophan N-methyltransferase easF of Arthroderma benhamiae (strain ATCC MYA-4681 / CBS 112371) (Trichophyton mentagrophytes).